The following is a 504-amino-acid chain: Maturase K (504 aa).

This sequence belongs to the intron maturase 2 family. MatK subfamily.

The protein resides in the plastid. It is found in the chloroplast. In terms of biological role, usually encoded in the trnK tRNA gene intron. Probably assists in splicing its own and other chloroplast group II introns. In Adansonia digitata (Baobab tree), this protein is Maturase K.